The following is a 918-amino-acid chain: Chaperone protein ClpC4, chloroplastic (918 aa).

Residues 266-515 (LMEYGTNLTK…RLRNAQCKPS (250 aa)) are i. ATP is bound by residues 311–318 (GEPGVGKT) and 653–660 (GPTGVGKS). Residues 579 to 774 (VTEDDVRHAI…LIVMTTNIGS (196 aa)) form an II region.

Belongs to the ClpA/ClpB family. ClpC subfamily.

The protein resides in the plastid. Its subcellular location is the chloroplast. Its function is as follows. Molecular chaperone that may interact with a ClpP-like protease involved in degradation of denatured proteins in the chloroplast. This Oryza sativa subsp. japonica (Rice) protein is Chaperone protein ClpC4, chloroplastic (CPLC4).